The chain runs to 157 residues: MATPPKRRAVEATGEKVLRYETFISDVLQRDLRKVLDHRDKVYEQLAKYLQLRNVIERLQEAKHSELYMQVDLGCNFFVDTVVPDTSRIYVALGYGFFLELTLAEALKFIDRKSSLLTELSNSLTKDSMNIKAHIHMLLEGLRELQGLQNFPEKPHH.

This sequence belongs to the UXT family. Homohexamer. Component of the PAQosome complex which is responsible for the biogenesis of several protein complexes and which consists of R2TP complex members RUVBL1, RUVBL2, RPAP3 and PIH1D1, URI complex members PFDN2, PFDN6, PDRG1, UXT and URI1 as well as ASDURF, POLR2E and DNAAF10/WDR92. Interacts with LRPPRC. Interacts with androgen receptor AR (via N-terminus). Interacts with estrogen receptor ESR1; the interaction relocalizes ESR1 from the nucleus to the cytoplasm. In the nucleus, interacts specifically with RELA (via RHD domain) and forms a dynamic complex with NF-kappa-B and is recruited to the NF-kappa-B enhanceosome upon stimulation. Interacts with MECOM. Interacts with URI1. In terms of assembly, part of complex I composed of TNF-alpha receptor TNFRSF1A, TRADD, TRAF2 and RIPK1 formed in response to TNF-alpha stimulation. Within the complex, interacts (via TPQE motif) with TRAF2; the interaction prevents the recruitment of FADD and CASP8/caspase 8 to complex I. Ubiquitinated by E3 ubiquitin-protein ligase complex containing FBXO7; leading to proteasomal degradation. In terms of tissue distribution, ubiquitous. Expressed in prostate epithelial cells. Expressed in mammary epithelial cells. Highest levels in the heart, skeletal muscle, pancreas, kidney, liver, adrenal gland, peripheral blood leukocytes, lymph node, prostate, and thyroid and the lowest levels in bladder and uterus. Overexpressed in a number of tumor tissues.

It is found in the cytoplasm. The protein resides in the nucleus. The protein localises to the cytoskeleton. Its subcellular location is the microtubule organizing center. It localises to the centrosome. It is found in the spindle pole. Involved in gene transcription regulation. Acts in concert with the corepressor URI1 to regulate androgen receptor AR-mediated transcription. Together with URI1, associates with chromatin to the NKX3-1 promoter region. Negatively regulates the transcriptional activity of the estrogen receptor ESR1 by inducing its translocation into the cytoplasm. May act as nuclear chaperone that facilitates the formation of the NF-kappa-B enhanceosome and thus positively regulates NF-kappa-B transcription activity. Potential component of mitochondrial-associated LRPPRC, a multidomain organizer that potentially integrates mitochondria and the microtubular cytoskeleton with chromosome remodeling. Increasing concentrations of UXT contributes to progressive aggregation of mitochondria and cell death potentially through its association with LRPPRC. Suppresses cell transformation and it might mediate this function by interaction and inhibition of the biological activity of cell proliferation and survival stimulatory factors like MECOM. Its function is as follows. Plays a role in protecting cells against TNF-alpha-induced apoptosis by preventing the recruitment of FADD and caspase 8 to the apoptotic complex I, composed of TRADD, TRAF2 and RIPK1/RIP. This Homo sapiens (Human) protein is Protein UXT (UXT).